The chain runs to 384 residues: Cell division protein FtsZ (384 aa).

Residues 20 to 24 (GGGGN), 107 to 109 (GTG), E138, R142, and N186 each bind GTP.

Belongs to the FtsZ family. Homodimer. Polymerizes to form a dynamic ring structure in a strictly GTP-dependent manner. Interacts directly with several other division proteins.

It localises to the cytoplasm. Essential cell division protein that forms a contractile ring structure (Z ring) at the future cell division site. The regulation of the ring assembly controls the timing and the location of cell division. One of the functions of the FtsZ ring is to recruit other cell division proteins to the septum to produce a new cell wall between the dividing cells. Binds GTP and shows GTPase activity. The sequence is that of Cell division protein FtsZ from Buchnera aphidicola subsp. Schizaphis graminum (strain Sg).